Here is a 400-residue protein sequence, read N- to C-terminus: Laminin subunit B (400 aa).

3 Laminin EGF-like domains span residues 1 to 5 (EGCKP), 6 to 53 (CECD…GCKS), and 54 to 100 (CTCN…QCIP). 8 cysteine pairs are disulfide-bonded: Cys-6/Cys-18, Cys-8/Cys-25, Cys-27/Cys-36, Cys-39/Cys-51, Cys-54/Cys-66, Cys-56/Cys-73, Cys-75/Cys-84, and Cys-87/Cys-98. Residues 101–400 (CGECFDNWDK…AEAKNNAHEA (300 aa)) form a domain II and I region. The stretch at 140-235 (KEFEELEQVL…RENALEIQEQ (96 aa)) forms a coiled coil. Residues Asn-160, Asn-175, Asn-216, Asn-266, Asn-283, Asn-310, and Asn-356 are each glycosylated (N-linked (GlcNAc...) asparagine). Residues 353-400 (EAKNTSRKAEELIKSKYRSTSSTLSELENSNKQCKQATAEAKNNAHEA) are a coiled coil. A disordered region spans residues 369–400 (YRSTSSTLSELENSNKQCKQATAEAKNNAHEA). Over residues 371–383 (STSSTLSELENSN) the composition is skewed to low complexity.

Laminin is a complex glycoprotein, consisting of three different polypeptide chains (alpha, beta, gamma), which are bound to each other by disulfide bonds into a cross-shaped molecule comprising one long and three short arms with globules at each end. In terms of tissue distribution, individual glial and muscle cells.

It localises to the secreted. The protein localises to the extracellular space. Its subcellular location is the extracellular matrix. In terms of biological role, binding to cells via a high affinity receptor, laminin is thought to mediate the attachment, migration and organization of cells into tissues during embryonic development by interacting with other extracellular matrix components. The sequence is that of Laminin subunit B from Hirudo medicinalis (Medicinal leech).